The following is a 363-amino-acid chain: Elongation factor Tu, chloroplastic (363 aa).

The tr-type G domain occupies 1 to 189 (TLTAAITMAL…NVDEYIPTPE (189 aa)). Residues 55 to 59 (DCPGH) and 110 to 113 (NKED) each bind GTP.

The protein belongs to the TRAFAC class translation factor GTPase superfamily. Classic translation factor GTPase family. EF-Tu/EF-1A subfamily.

The protein resides in the plastid. Its subcellular location is the chloroplast. The enzyme catalyses GTP + H2O = GDP + phosphate + H(+). Its function is as follows. GTP hydrolase that promotes the GTP-dependent binding of aminoacyl-tRNA to the A-site of ribosomes during protein biosynthesis. The polypeptide is Elongation factor Tu, chloroplastic (tufA) (Gymnochlora stellata).